Reading from the N-terminus, the 504-residue chain is MTTNTEKYILALDLGTTGNRAILFNSQGASVAQAYKELSQYYPHPGWLEHNAEEIWEDTYAMIKDVFRDTGVSSSNVEAIGLTVQRETCLLWDKTTGKPLHKAIVWQDRRTASLCQELAAKGEAEKIKTRTGLVLDAYFSATKLSWLLDWVKEEKPNLDLKNVLAGTIDTWVLWKLTGGKVHATDHSNASRTMLMNIESLNWDQELLDLFQIPREMMPQIQPSFSIFGKSEPDLLGGSIPIAAVLGDQQAALFAHGCNFPGMSKCTYGTGSFLIANTGNHVTKSQNQLLSTIAWTQLVKGKLQATYALEGAMFTTGACIQWLRDGIKLIDSVAETENLALQVEDTNGVYFVPALSGLGAPHWDMDARGAILGITGGVQRENIIRAVLESIAFQVKEVVDAVNKDSGIPMSHLKVDGGVSQNNFLMQYQANLLGIPVERPAFIDATAQGAAFAAGLTIGLWNNYQKLLSNNKVGQVFEPNKNATKVQESFVVWQKAVSRAKNWIN.

Thr-16 contacts ADP. ATP is bound by residues Thr-16 and Thr-17. Thr-16 contributes to the sn-glycerol 3-phosphate binding site. Arg-20 is a binding site for ADP. Sn-glycerol 3-phosphate-binding residues include Arg-86, Glu-87, Tyr-138, and Asp-247. Glycerol-binding residues include Arg-86, Glu-87, Tyr-138, Asp-247, and Gln-248. Thr-269 and Gly-316 together coordinate ADP. Positions 269, 316, 320, and 417 each coordinate ATP. The ADP site is built by Gly-417 and Asn-421.

The protein belongs to the FGGY kinase family.

The catalysed reaction is glycerol + ATP = sn-glycerol 3-phosphate + ADP + H(+). It participates in polyol metabolism; glycerol degradation via glycerol kinase pathway; sn-glycerol 3-phosphate from glycerol: step 1/1. With respect to regulation, inhibited by fructose 1,6-bisphosphate (FBP). Its function is as follows. Key enzyme in the regulation of glycerol uptake and metabolism. Catalyzes the phosphorylation of glycerol to yield sn-glycerol 3-phosphate. The chain is Glycerol kinase from Trichodesmium erythraeum (strain IMS101).